The primary structure comprises 469 residues: Protein YfjI (469 aa).

The sequence is that of Protein YfjI (yfjI) from Escherichia coli (strain K12).